A 601-amino-acid polypeptide reads, in one-letter code: Elongation factor 4 (601 aa).

The region spanning 5–187 (IRKKNFCIIA…AICKYVPSPK (183 aa)) is the tr-type G domain. Residues 17-22 (DHGKST) and 134-137 (NKID) contribute to the GTP site.

It belongs to the TRAFAC class translation factor GTPase superfamily. Classic translation factor GTPase family. LepA subfamily.

It is found in the cell inner membrane. The enzyme catalyses GTP + H2O = GDP + phosphate + H(+). In terms of biological role, required for accurate and efficient protein synthesis under certain stress conditions. May act as a fidelity factor of the translation reaction, by catalyzing a one-codon backward translocation of tRNAs on improperly translocated ribosomes. Back-translocation proceeds from a post-translocation (POST) complex to a pre-translocation (PRE) complex, thus giving elongation factor G a second chance to translocate the tRNAs correctly. Binds to ribosomes in a GTP-dependent manner. This Borreliella afzelii (strain PKo) (Borrelia afzelii) protein is Elongation factor 4.